A 340-amino-acid chain; its full sequence is Glycerol-3-phosphate dehydrogenase [NAD(P)+] (340 aa).

Residues S14, W15, and K109 each contribute to the NADPH site. Residues K109, G140, and S142 each coordinate sn-glycerol 3-phosphate. A144 is an NADPH binding site. Residues K195, D248, S258, R259, and N260 each coordinate sn-glycerol 3-phosphate. K195 (proton acceptor) is an active-site residue. R259 lines the NADPH pocket. NADPH contacts are provided by V283 and E285.

It belongs to the NAD-dependent glycerol-3-phosphate dehydrogenase family.

The protein localises to the cytoplasm. The enzyme catalyses sn-glycerol 3-phosphate + NAD(+) = dihydroxyacetone phosphate + NADH + H(+). It carries out the reaction sn-glycerol 3-phosphate + NADP(+) = dihydroxyacetone phosphate + NADPH + H(+). It participates in membrane lipid metabolism; glycerophospholipid metabolism. Its function is as follows. Catalyzes the reduction of the glycolytic intermediate dihydroxyacetone phosphate (DHAP) to sn-glycerol 3-phosphate (G3P), the key precursor for phospholipid synthesis. The chain is Glycerol-3-phosphate dehydrogenase [NAD(P)+] from Syntrophobacter fumaroxidans (strain DSM 10017 / MPOB).